A 776-amino-acid chain; its full sequence is Protein translocase subunit SecA 2 (776 aa).

Residues glutamine 80, 98-102 (GEGKT), and aspartate 486 contribute to the ATP site.

The protein belongs to the SecA family. As to quaternary structure, monomer and homodimer. Part of the essential Sec protein translocation apparatus which comprises SecA, SecYEG and auxiliary proteins SecDF. Other proteins may also be involved.

Its subcellular location is the cell membrane. The protein resides in the cytoplasm. The enzyme catalyses ATP + H2O + cellular proteinSide 1 = ADP + phosphate + cellular proteinSide 2.. Part of the Sec protein translocase complex. Interacts with the SecYEG preprotein conducting channel. Has a central role in coupling the hydrolysis of ATP to the transfer of proteins into and across the cell membrane, serving as an ATP-driven molecular motor driving the stepwise translocation of polypeptide chains across the membrane. The sequence is that of Protein translocase subunit SecA 2 from Listeria innocua serovar 6a (strain ATCC BAA-680 / CLIP 11262).